A 114-amino-acid chain; its full sequence is Phosphoribosyl-AMP cyclohydrolase (114 aa).

Asp-76 contributes to the Mg(2+) binding site. Position 77 (Cys-77) interacts with Zn(2+). 2 residues coordinate Mg(2+): Asp-78 and Asp-80. Cys-93 and Cys-100 together coordinate Zn(2+).

It belongs to the PRA-CH family. As to quaternary structure, homodimer. The cofactor is Mg(2+). Requires Zn(2+) as cofactor.

It is found in the cytoplasm. The catalysed reaction is 1-(5-phospho-beta-D-ribosyl)-5'-AMP + H2O = 1-(5-phospho-beta-D-ribosyl)-5-[(5-phospho-beta-D-ribosylamino)methylideneamino]imidazole-4-carboxamide. It functions in the pathway amino-acid biosynthesis; L-histidine biosynthesis; L-histidine from 5-phospho-alpha-D-ribose 1-diphosphate: step 3/9. Catalyzes the hydrolysis of the adenine ring of phosphoribosyl-AMP. This is Phosphoribosyl-AMP cyclohydrolase from Streptococcus sanguinis (strain SK36).